A 436-amino-acid polypeptide reads, in one-letter code: GTPase Der (436 aa).

2 consecutive EngA-type G domains span residues 4–167 and 176–351; these read PVVA…PKGG and IKFC…DNHA. GTP-binding positions include 10–17, 57–61, 119–122, 182–189, 229–233, and 294–297; these read GRPNVGKS, DTGGI, NKID, DTAGM, and NKWD. One can recognise a KH-like domain in the interval 352-436; the sequence is MRVQTNVLNE…PIKIIARPRK (85 aa).

The protein belongs to the TRAFAC class TrmE-Era-EngA-EngB-Septin-like GTPase superfamily. EngA (Der) GTPase family. Associates with the 50S ribosomal subunit.

Its function is as follows. GTPase that plays an essential role in the late steps of ribosome biogenesis. The chain is GTPase Der from Geobacillus kaustophilus (strain HTA426).